Consider the following 143-residue polypeptide: SsrA-binding protein (143 aa).

Belongs to the SmpB family.

It is found in the cytoplasm. Its function is as follows. Required for rescue of stalled ribosomes mediated by trans-translation. Binds to transfer-messenger RNA (tmRNA), required for stable association of tmRNA with ribosomes. tmRNA and SmpB together mimic tRNA shape, replacing the anticodon stem-loop with SmpB. tmRNA is encoded by the ssrA gene; the 2 termini fold to resemble tRNA(Ala) and it encodes a 'tag peptide', a short internal open reading frame. During trans-translation Ala-aminoacylated tmRNA acts like a tRNA, entering the A-site of stalled ribosomes, displacing the stalled mRNA. The ribosome then switches to translate the ORF on the tmRNA; the nascent peptide is terminated with the 'tag peptide' encoded by the tmRNA and targeted for degradation. The ribosome is freed to recommence translation, which seems to be the essential function of trans-translation. This chain is SsrA-binding protein, found in Deinococcus radiodurans (strain ATCC 13939 / DSM 20539 / JCM 16871 / CCUG 27074 / LMG 4051 / NBRC 15346 / NCIMB 9279 / VKM B-1422 / R1).